A 574-amino-acid chain; its full sequence is Putative thiamine pyrophosphate-containing protein YdaP (574 aa).

The stretch at 28–55 forms a coiled coil; it reads DSINEFIEELRHERNQLKFIQTRHEEVA. Thiamine diphosphate is bound at residue E52. FAD-binding positions include 256–277 and 294–313; these read IGTK…LGTS and DSDP…LVCD. A thiamine pyrophosphate binding region spans residues 384-464; the sequence is TVTVWMARHF…ITVVILNNEN (81 aa). Residues D435 and N462 each contribute to the Mg(2+) site.

Belongs to the TPP enzyme family. It depends on Mg(2+) as a cofactor. Thiamine diphosphate is required as a cofactor.

The chain is Putative thiamine pyrophosphate-containing protein YdaP (ydaP) from Bacillus subtilis (strain 168).